Reading from the N-terminus, the 179-residue chain is MAGSGRDRDPLVVGRVVGDVLDAFVRSTNLKVTYGSKTVSNGCELKPSMVTHQPRVEVGGNDMRTFYTLVMVDPDAPSPSDPNLREYLHWLVTDIPGTTAASFGQEVMCYESPRPTMGIHRLVFVLFQQLGRQTVYAPGWRQNFNTKDFAELYNLGSPVAAVYFNCQREAGSGGRRVYP.

This sequence belongs to the phosphatidylethanolamine-binding protein family. Expressed in the inner region of the SAM, stem and leaf blade vascular tissues (at protein level).

The protein localises to the cytoplasm. It is found in the nucleus. Functionally, probable mobile flower-promoting signal (florigen) that moves from the leaf to the shoot apical meristem (SAM) and induces flowering. Promotes the transition from vegetative growth to flowering downstream of HD1 and EHD1 under short day (SD) conditions. Acts upstream of MADS14 and MADS15. The sequence is that of Protein HEADING DATE 3A (HD3A) from Oryza sativa subsp. japonica (Rice).